Here is a 133-residue protein sequence, read N- to C-terminus: Capsid protein (133 aa).

It belongs to the Leviviricetes capsid protein family. Homodimer. The homodimers binds to the viral RNA via an operator hairpin, but also to many other RNA sequences in the viral genome; this interaction probably shifts the virus from the replicative to the assembly phase and ensures specific encapsidation of the viral genome. Interacts with the maturation protein A2.

The protein resides in the virion. In terms of biological role, capsid protein self-assembles to form an icosahedral capsid with a T=3 symmetry, about 26 nm in diameter, and consisting of 89 capsid proteins dimers (178 capsid proteins). Involved in viral genome encapsidation through the interaction between a capsid protein dimer and the multiple packaging signals present in the RNA genome. Binding of the capsid proteins to the viral RNA induces a conformational change required for efficient T=3 shell formation. The capsid also contains 1 copy of the A2 maturation protein. Its function is as follows. Acts as a translational repressor of viral replicase synthesis late in infection. This latter function is the result of capsid protein interaction with an RNA hairpin which contains the replicase ribosome-binding site. The sequence is that of Capsid protein from Escherichia virus Qbeta (Bacteriophage Q-beta).